The primary structure comprises 368 residues: MTNPTKPIPLNFDKPRRFMPPKHFADLSADERIDALKELGLPKFRANQIARHYYGRLEADPSTMTDLPAAAREKVKDALFPQLMQPVRAVQADDGETQKTLWKLHDGTLLESVLMRYPNRATLCISSQAGCGMACPFCATGQGGLDRNLSTGEIVDQVRAASATMQAEGGRLSNIVFMGMGEPLANYKRVVSAVRQITAPVPEGFGISQRNVTVSTVGLAPAIRKLADEDLSVTLAVSLHTPDDELRNTLVPTNNRWEVAEVLDAARYYADRSGRRVSIEYALIRDVNDQGWRADMLGKKLHKALGPLVHVNLIPLNPTPGSKWDASPMDRQKEFVQRVIAQGVTCTVRDTRGQEIAAACGQLAAEER.

Residue Glu-111 is the Proton acceptor of the active site. The Radical SAM core domain occupies 117–355; it reads YPNRATLCIS…CTVRDTRGQE (239 aa). The cysteines at positions 124 and 360 are disulfide-linked. The [4Fe-4S] cluster site is built by Cys-131, Cys-135, and Cys-138. Residues 181–182, Ser-215, 238–240, and Asn-317 each bind S-adenosyl-L-methionine; these read GE and SLH. Cys-360 serves as the catalytic S-methylcysteine intermediate.

This sequence belongs to the radical SAM superfamily. RlmN family. The cofactor is [4Fe-4S] cluster.

The protein resides in the cytoplasm. It carries out the reaction adenosine(2503) in 23S rRNA + 2 reduced [2Fe-2S]-[ferredoxin] + 2 S-adenosyl-L-methionine = 2-methyladenosine(2503) in 23S rRNA + 5'-deoxyadenosine + L-methionine + 2 oxidized [2Fe-2S]-[ferredoxin] + S-adenosyl-L-homocysteine. The catalysed reaction is adenosine(37) in tRNA + 2 reduced [2Fe-2S]-[ferredoxin] + 2 S-adenosyl-L-methionine = 2-methyladenosine(37) in tRNA + 5'-deoxyadenosine + L-methionine + 2 oxidized [2Fe-2S]-[ferredoxin] + S-adenosyl-L-homocysteine. In terms of biological role, specifically methylates position 2 of adenine 2503 in 23S rRNA and position 2 of adenine 37 in tRNAs. This is Probable dual-specificity RNA methyltransferase RlmN from Corynebacterium diphtheriae (strain ATCC 700971 / NCTC 13129 / Biotype gravis).